The following is a 188-amino-acid chain: Guanylate kinase (188 aa).

The 181-residue stretch at 8-188 (GRIVVLAGPS…AVAAISEILR (181 aa)) folds into the Guanylate kinase-like domain. Position 15 to 22 (15 to 22 (GPSAVGKS)) interacts with ATP.

It belongs to the guanylate kinase family.

The protein localises to the cytoplasm. The enzyme catalyses GMP + ATP = GDP + ADP. Its function is as follows. Essential for recycling GMP and indirectly, cGMP. The chain is Guanylate kinase from Corynebacterium jeikeium (strain K411).